A 151-amino-acid polypeptide reads, in one-letter code: Phosphoribosyl-AMP cyclohydrolase (151 aa).

Asp94 is a binding site for Mg(2+). Residue Cys95 participates in Zn(2+) binding. Residues Asp96 and Asp98 each coordinate Mg(2+). Residues Cys112 and Cys119 each coordinate Zn(2+).

Belongs to the PRA-CH family. As to quaternary structure, homodimer. Mg(2+) is required as a cofactor. Zn(2+) serves as cofactor.

The protein resides in the cytoplasm. The catalysed reaction is 1-(5-phospho-beta-D-ribosyl)-5'-AMP + H2O = 1-(5-phospho-beta-D-ribosyl)-5-[(5-phospho-beta-D-ribosylamino)methylideneamino]imidazole-4-carboxamide. It functions in the pathway amino-acid biosynthesis; L-histidine biosynthesis; L-histidine from 5-phospho-alpha-D-ribose 1-diphosphate: step 3/9. Functionally, catalyzes the hydrolysis of the adenine ring of phosphoribosyl-AMP. In Rhodopseudomonas palustris (strain TIE-1), this protein is Phosphoribosyl-AMP cyclohydrolase.